A 633-amino-acid chain; its full sequence is DEAD-box ATP-dependent RNA helicase 27 (633 aa).

Residues 1 to 17 (MANLDMEQHSSENEEIK) show a composition bias toward basic and acidic residues. Positions 1–147 (MANLDMEQHS…DKEEEKKLEE (147 aa)) are disordered. A coiled-coil region spans residues 2-34 (ANLDMEQHSSENEEIKKKKHKKRARDEAKKLKQ). Composition is skewed to acidic residues over residues 37-47 (MEEEPDHEDGD) and 74-83 (DDGEDEAVAE). Basic residues predominate over residues 88 to 97 (KKKKKNKKLQ). 2 stretches are compositionally biased toward acidic residues: residues 103 to 114 (NDEEDEVIAEEE) and 131 to 140 (SEEEEVEDKE). A coiled-coil region spans residues 117–153 (KKKKKKQRKDTEAKSEEEEVEDKEEEKKLEETSIMTN). Residues 154 to 182 (KTFESLSLSDNTYKSIKEMGFARMTQIQA) carry the Q motif motif. Positions 185–360 (IPPLMMGEDV…RVSLTSPVYI (176 aa)) constitute a Helicase ATP-binding domain. An ATP-binding site is contributed by 198 to 205 (ARTGSGKT). Positions 308–311 (DEAD) match the DEAD box motif. A Helicase C-terminal domain is found at 386–534 (RLLFLLTFLK…EHEFEEKKLL (149 aa)). The segment at 608–633 (KREPVNKFKRGRGGGRPGGKSKFERY) is disordered.

The protein belongs to the DEAD box helicase family. DDX18/HAS1 subfamily.

The enzyme catalyses ATP + H2O = ADP + phosphate + H(+). The polypeptide is DEAD-box ATP-dependent RNA helicase 27 (RH27) (Arabidopsis thaliana (Mouse-ear cress)).